Reading from the N-terminus, the 118-residue chain is MSAPAQPPAEGTEGTAPGGGPPGPPPNMTSNRRLQQTQAQVEEVVDIIRVNVDKVLERDQKLSELDDRADALQAGASQFESSAAKLKRKYWWKNCKMMIMLGAICAIIVVVIVIYFFT.

The interval 1–36 is disordered; the sequence is MSAPAQPPAEGTEGTAPGGGPPGPPPNMTSNRRLQQ. Residues 1–96 are Cytoplasmic-facing; that stretch reads MSAPAQPPAE…KRKYWWKNCK (96 aa). The 61-residue stretch at 33-93 folds into the v-SNARE coiled-coil homology domain; the sequence is RLQQTQAQVE…AKLKRKYWWK (61 aa). A Phosphoserine modification is found at Ser-63. A helical; Anchor for type IV membrane protein membrane pass occupies residues 97 to 116; the sequence is MMIMLGAICAIIVVVIVIYF. The Vesicular portion of the chain corresponds to 117 to 118; sequence FT.

Belongs to the synaptobrevin family. As to quaternary structure, interacts with VAPA and VAPB. Post-translationally, (Microbial infection) Targeted and hydrolyzed by C.botulinum neurotoxin type B (BoNT/B, botB) which probably hydrolyzes the 78-Gln-|-Phe-79 bond and inhibits neurotransmitter release. In terms of processing, (Microbial infection) Targeted and hydrolyzed by C.botulinum neurotoxin type D (BoNT/D, botD) which probably hydrolyzes the 61-Arg-|-Leu-62 bond and inhibits neurotransmitter release. BoNT/D has low catalytic activity on this protein due to its sequence. Note that humans are not known to be infected by C.botulinum type D. (Microbial infection) Targeted and hydrolyzed by C.botulinum neurotoxin type F (BoNT/F, botF) which probably hydrolyzes the 60-Gln-|-Lys-61 bond and inhibits neurotransmitter release. Post-translationally, (Microbial infection) Targeted and hydrolyzed by C.botulinum neurotoxin type X (BoNT/X) which probably hydrolyzes the 68-Arg-|-Ala-69 bond and inhibits neurotransmitter release. It remains unknown whether BoNT/X is ever produced, or what organisms it targets. In terms of tissue distribution, nervous system, skeletal muscle and adipose tissue.

It is found in the cytoplasmic vesicle. It localises to the secretory vesicle. The protein localises to the synaptic vesicle membrane. The protein resides in the synapse. Its subcellular location is the synaptosome. It is found in the cytoplasmic vesicle membrane. It localises to the mitochondrion outer membrane. In terms of biological role, involved in the targeting and/or fusion of transport vesicles to their target membrane. In Homo sapiens (Human), this protein is Vesicle-associated membrane protein 1 (VAMP1).